The sequence spans 169 residues: Large ribosomal subunit protein bL9 (169 aa).

The protein belongs to the bacterial ribosomal protein bL9 family.

In terms of biological role, binds to the 23S rRNA. In Chlamydia pneumoniae (Chlamydophila pneumoniae), this protein is Large ribosomal subunit protein bL9.